A 330-amino-acid polypeptide reads, in one-letter code: MKDKAYDITIIGGGPIGLFAAFYAGLRGVTVKIIESLSELGGQPAILYPEKMIYDIPAYPSLTGVELTENLIKQLNRFEDRITICLKEEVLTFDKVKGGFSIRTNKAEHFSKAIIIACGNGAFAPRTLGLESEENFADHNLFYNVHQLDQFAGQKVVICGGGDSAVDWALALEDIAESVTVVHRRDAFRAHEHSVELLTTSTVNLLTPYVPKALKGIGNLAEKLVIQKVKEDEVLELELDSLIVSFGFSTSNKNLKNWNLDYKRSSITVSPLFQTSQEGIFAIGDAAAYNGKVDLIATGFGEAPTAVNQAINYIYPDRDNRVVHSTSLID.

7 residues coordinate FAD: E35, Q43, Y48, V90, F123, D285, and T326.

The protein belongs to the ferredoxin--NADP reductase type 2 family. As to quaternary structure, homodimer. FAD serves as cofactor.

The enzyme catalyses 2 reduced [2Fe-2S]-[ferredoxin] + NADP(+) + H(+) = 2 oxidized [2Fe-2S]-[ferredoxin] + NADPH. The protein is Ferredoxin--NADP reductase of Streptococcus pyogenes serotype M28 (strain MGAS6180).